The primary structure comprises 286 residues: 4-hydroxy-3-methylbut-2-enyl diphosphate reductase (286 aa).

[4Fe-4S] cluster is bound at residue C12. Residues H46 and H79 each contribute to the (2E)-4-hydroxy-3-methylbut-2-enyl diphosphate site. Positions 46 and 79 each coordinate dimethylallyl diphosphate. Isopentenyl diphosphate contacts are provided by H46 and H79. Residue C101 participates in [4Fe-4S] cluster binding. H129 is a (2E)-4-hydroxy-3-methylbut-2-enyl diphosphate binding site. H129 serves as a coordination point for dimethylallyl diphosphate. H129 contributes to the isopentenyl diphosphate binding site. Residue E131 is the Proton donor of the active site. (2E)-4-hydroxy-3-methylbut-2-enyl diphosphate is bound at residue T169. C198 serves as a coordination point for [4Fe-4S] cluster. (2E)-4-hydroxy-3-methylbut-2-enyl diphosphate is bound by residues S226, N228, and S270. Dimethylallyl diphosphate contacts are provided by S226, N228, and S270. Isopentenyl diphosphate contacts are provided by S226, N228, and S270.

It belongs to the IspH family. Requires [4Fe-4S] cluster as cofactor.

It carries out the reaction isopentenyl diphosphate + 2 oxidized [2Fe-2S]-[ferredoxin] + H2O = (2E)-4-hydroxy-3-methylbut-2-enyl diphosphate + 2 reduced [2Fe-2S]-[ferredoxin] + 2 H(+). The enzyme catalyses dimethylallyl diphosphate + 2 oxidized [2Fe-2S]-[ferredoxin] + H2O = (2E)-4-hydroxy-3-methylbut-2-enyl diphosphate + 2 reduced [2Fe-2S]-[ferredoxin] + 2 H(+). It participates in isoprenoid biosynthesis; dimethylallyl diphosphate biosynthesis; dimethylallyl diphosphate from (2E)-4-hydroxy-3-methylbutenyl diphosphate: step 1/1. It functions in the pathway isoprenoid biosynthesis; isopentenyl diphosphate biosynthesis via DXP pathway; isopentenyl diphosphate from 1-deoxy-D-xylulose 5-phosphate: step 6/6. Its function is as follows. Catalyzes the conversion of 1-hydroxy-2-methyl-2-(E)-butenyl 4-diphosphate (HMBPP) into a mixture of isopentenyl diphosphate (IPP) and dimethylallyl diphosphate (DMAPP). Acts in the terminal step of the DOXP/MEP pathway for isoprenoid precursor biosynthesis. This chain is 4-hydroxy-3-methylbut-2-enyl diphosphate reductase, found in Solidesulfovibrio magneticus (strain ATCC 700980 / DSM 13731 / RS-1) (Desulfovibrio magneticus).